The chain runs to 115 residues: Ribonuclease P protein component (115 aa).

The protein belongs to the RnpA family. As to quaternary structure, consists of a catalytic RNA component (M1 or rnpB) and a protein subunit.

It catalyses the reaction Endonucleolytic cleavage of RNA, removing 5'-extranucleotides from tRNA precursor.. Its function is as follows. RNaseP catalyzes the removal of the 5'-leader sequence from pre-tRNA to produce the mature 5'-terminus. It can also cleave other RNA substrates such as 4.5S RNA. The protein component plays an auxiliary but essential role in vivo by binding to the 5'-leader sequence and broadening the substrate specificity of the ribozyme. The chain is Ribonuclease P protein component from Bacillus cereus (strain B4264).